The sequence spans 322 residues: 4-hydroxy-3-methylbut-2-enyl diphosphate reductase (322 aa).

Cys-15 contacts [4Fe-4S] cluster. Positions 44 and 77 each coordinate (2E)-4-hydroxy-3-methylbut-2-enyl diphosphate. The dimethylallyl diphosphate site is built by His-44 and His-77. 2 residues coordinate isopentenyl diphosphate: His-44 and His-77. Cys-99 serves as a coordination point for [4Fe-4S] cluster. A (2E)-4-hydroxy-3-methylbut-2-enyl diphosphate-binding site is contributed by His-127. A dimethylallyl diphosphate-binding site is contributed by His-127. Isopentenyl diphosphate is bound at residue His-127. The active-site Proton donor is the Glu-129. Residue Thr-168 participates in (2E)-4-hydroxy-3-methylbut-2-enyl diphosphate binding. Residue Cys-198 coordinates [4Fe-4S] cluster. (2E)-4-hydroxy-3-methylbut-2-enyl diphosphate-binding residues include Ser-226, Ser-227, Asn-228, and Ser-270. Residues Ser-226, Ser-227, Asn-228, and Ser-270 each coordinate dimethylallyl diphosphate. Isopentenyl diphosphate is bound by residues Ser-226, Ser-227, Asn-228, and Ser-270.

It belongs to the IspH family. Requires [4Fe-4S] cluster as cofactor.

The catalysed reaction is isopentenyl diphosphate + 2 oxidized [2Fe-2S]-[ferredoxin] + H2O = (2E)-4-hydroxy-3-methylbut-2-enyl diphosphate + 2 reduced [2Fe-2S]-[ferredoxin] + 2 H(+). The enzyme catalyses dimethylallyl diphosphate + 2 oxidized [2Fe-2S]-[ferredoxin] + H2O = (2E)-4-hydroxy-3-methylbut-2-enyl diphosphate + 2 reduced [2Fe-2S]-[ferredoxin] + 2 H(+). It functions in the pathway isoprenoid biosynthesis; dimethylallyl diphosphate biosynthesis; dimethylallyl diphosphate from (2E)-4-hydroxy-3-methylbutenyl diphosphate: step 1/1. Its pathway is isoprenoid biosynthesis; isopentenyl diphosphate biosynthesis via DXP pathway; isopentenyl diphosphate from 1-deoxy-D-xylulose 5-phosphate: step 6/6. Catalyzes the conversion of 1-hydroxy-2-methyl-2-(E)-butenyl 4-diphosphate (HMBPP) into a mixture of isopentenyl diphosphate (IPP) and dimethylallyl diphosphate (DMAPP). Acts in the terminal step of the DOXP/MEP pathway for isoprenoid precursor biosynthesis. The chain is 4-hydroxy-3-methylbut-2-enyl diphosphate reductase from Neisseria gonorrhoeae (strain ATCC 700825 / FA 1090).